A 347-amino-acid chain; its full sequence is Protein XRP2 (347 aa).

Basic residues predominate over residues 1–11 (MGCCFTKRRKS). Residues 1-22 (MGCCFTKRRKSEKAEGEEEQPK) are disordered. Gly2 carries the N-myristoyl glycine lipid modification. Residue Cys3 is the site of S-palmitoyl cysteine attachment. A C-CAP/cofactor C-like domain is found at 21-176 (PKLYSWDQRE…IWSHVHDFTP (156 aa)). Residues 95-96 (GS) and 112-115 (QQFR) each bind GTP.

This sequence belongs to the TBCC family. As to quaternary structure, found in a complex with ARL3, RP2 and UNC119 (or UNC119B); RP2 induces hydrolysis of GTP ARL3 in the complex, leading to the release of UNC119 (or UNC119B). Interacts with ARL3; interaction is direct and stimulated with the activated GTP-bound form of ARL3. In terms of processing, myristoylated on Gly-2; which may be required for membrane targeting. Palmitoylated on Cys-3; which may be required for plasma membrane targeting. In terms of tissue distribution, retina (at protein level).

The protein localises to the cell membrane. It localises to the cell projection. Its subcellular location is the cilium. Its function is as follows. Acts as a GTPase-activating protein (GAP) involved in trafficking between the Golgi and the ciliary membrane. Involved in localization of proteins, such as NPHP3, to the cilium membrane by inducing hydrolysis of GTP ARL3, leading to the release of UNC119 (or UNC119B). Acts as a GTPase-activating protein (GAP) for tubulin in concert with tubulin-specific chaperone C, but does not enhance tubulin heterodimerization. Acts as a guanine nucleotide dissociation inhibitor towards ADP-ribosylation factor-like proteins. In Mus musculus (Mouse), this protein is Protein XRP2 (Rp2).